Here is a 122-residue protein sequence, read N- to C-terminus: Large ribosomal subunit protein uL14 (122 aa).

It belongs to the universal ribosomal protein uL14 family. As to quaternary structure, part of the 50S ribosomal subunit. Forms a cluster with proteins L3 and L19. In the 70S ribosome, L14 and L19 interact and together make contacts with the 16S rRNA in bridges B5 and B8.

Binds to 23S rRNA. Forms part of two intersubunit bridges in the 70S ribosome. This is Large ribosomal subunit protein uL14 from Xanthomonas oryzae pv. oryzae (strain MAFF 311018).